The sequence spans 854 residues: DNA mismatch repair protein MutS (854 aa).

615-622 (GPNMGGKS) is an ATP binding site.

The protein belongs to the DNA mismatch repair MutS family.

Functionally, this protein is involved in the repair of mismatches in DNA. It is possible that it carries out the mismatch recognition step. This protein has a weak ATPase activity. In Proteus mirabilis (strain HI4320), this protein is DNA mismatch repair protein MutS.